The following is a 189-amino-acid chain: Calcium and integrin-binding family member 2 (189 aa).

EF-hand domains lie at 68–103 (RENP…FSEQ), 105–140 (PRDI…MTKN), and 146–181 (EHQQ…APDF). Positions 118, 120, 122, 129, 159, 161, 163, 165, and 170 each coordinate Ca(2+).

In terms of assembly, monomer. Homodimer.

The protein resides in the cytoplasm. Its function is as follows. Calcium- and integrin-binding protein. Plays a role in intracellular calcium homeostasis. Critical for proper photoreceptor cell maintenance and function. Required for prevention of light-dependent retinal degeneration. This chain is Calcium and integrin-binding family member 2, found in Drosophila melanogaster (Fruit fly).